Here is a 169-residue protein sequence, read N- to C-terminus: Lipoprotein signal peptidase (169 aa).

The next 3 helical transmembrane spans lie at methionine 1–valine 21, tryptophan 68–leucine 88, and histidine 94–tyrosine 114. Active-site residues include aspartate 124 and aspartate 143. A helical transmembrane segment spans residues phenylalanine 135 to leucine 155.

Belongs to the peptidase A8 family.

The protein resides in the cell inner membrane. The catalysed reaction is Release of signal peptides from bacterial membrane prolipoproteins. Hydrolyzes -Xaa-Yaa-Zaa-|-(S,diacylglyceryl)Cys-, in which Xaa is hydrophobic (preferably Leu), and Yaa (Ala or Ser) and Zaa (Gly or Ala) have small, neutral side chains.. It functions in the pathway protein modification; lipoprotein biosynthesis (signal peptide cleavage). Its function is as follows. This protein specifically catalyzes the removal of signal peptides from prolipoproteins. This Ectopseudomonas mendocina (strain ymp) (Pseudomonas mendocina) protein is Lipoprotein signal peptidase.